The chain runs to 469 residues: Chromosomal replication initiator protein DnaA (469 aa).

Residues 1-71 (MKEFWQTCVS…EALAAEWYQR (71 aa)) are domain I, interacts with DnaA modulators. The tract at residues 71–131 (RPVQVTFELP…DAANIVYERS (61 aa)) is domain II. The segment at 132–348 (RLNTDLTFEN…GALRKVLAYA (217 aa)) is domain III, AAA+ region. Residues Gly176, Gly178, Lys179, and Thr180 each coordinate ATP. The interval 349–469 (RFHGRDVLTV…LHVLEQTLKG (121 aa)) is domain IV, binds dsDNA.

It belongs to the DnaA family. Oligomerizes as a right-handed, spiral filament on DNA at oriC.

The protein resides in the cytoplasm. Plays an essential role in the initiation and regulation of chromosomal replication. ATP-DnaA binds to the origin of replication (oriC) to initiate formation of the DNA replication initiation complex once per cell cycle. Binds the DnaA box (a 9 base pair repeat at the origin) and separates the double-stranded (ds)DNA. Forms a right-handed helical filament on oriC DNA; dsDNA binds to the exterior of the filament while single-stranded (ss)DNA is stabiized in the filament's interior. The ATP-DnaA-oriC complex binds and stabilizes one strand of the AT-rich DNA unwinding element (DUE), permitting loading of DNA polymerase. After initiation quickly degrades to an ADP-DnaA complex that is not apt for DNA replication. Binds acidic phospholipids. The sequence is that of Chromosomal replication initiator protein DnaA from Bordetella parapertussis (strain 12822 / ATCC BAA-587 / NCTC 13253).